The primary structure comprises 314 residues: MSHNKMENNDCICGNNSQPIENNKCSISFIVNDYINTKNTNTAPTTNNNNNNNNSSRDFFDPLTNSNRRCYVINFLNSVCYIRNQPYNIIIHRNAIEKICDCRIFIANEISIYNSLKTKDDLFLNMINLTSFINDCVTELIFLDSFQSSLVIDIQMFSNEIGTRNVPNRKIPTPVLPPLVSDNNSTNLQNQISSQTITSQSPHINNNNTITDANLFPRKRRLNVNNYIVKETMELSKKLRTTNQTSDDYNTPKIIRKLKLRPGDCYMCPNIESNNWRNFIFNGQHITLCNACGLRMIKINKKEKEIQNSMFTTR.

The protein is GATA zinc finger domain-containing protein 19 (gtaS) of Dictyostelium discoideum (Social amoeba).